Reading from the N-terminus, the 359-residue chain is DNA-directed RNA polymerase RPB3-11 homolog (359 aa).

It in the N-terminal section; belongs to the archaeal RpoD/eukaryotic RPB3 RNA polymerase subunit family. In the C-terminal section; belongs to the archaeal RpoL/eukaryotic RPB11/RPC19 RNA polymerase subunit family. In terms of assembly, part of the viral DNA-directed RNA polymerase that consists of 8 polII-like subunits (RPB1, RPB2, RPB3, RPB5, RPB6, RPB7, RPB9, RPB10), a capping enzyme and a termination factor.

It localises to the host cytoplasm. The protein resides in the virion. In terms of biological role, component of the DNA-directed RNA polymerase (RNAP) that catalyzes the transcription in the cytoplasm of viral DNA into RNA using the four ribonucleoside triphosphates as substrates. This Ornithodoros (relapsing fever ticks) protein is DNA-directed RNA polymerase RPB3-11 homolog.